A 282-amino-acid chain; its full sequence is Ribosomal RNA small subunit methyltransferase I (282 aa).

Belongs to the methyltransferase superfamily. RsmI family.

The protein localises to the cytoplasm. The enzyme catalyses cytidine(1402) in 16S rRNA + S-adenosyl-L-methionine = 2'-O-methylcytidine(1402) in 16S rRNA + S-adenosyl-L-homocysteine + H(+). Catalyzes the 2'-O-methylation of the ribose of cytidine 1402 (C1402) in 16S rRNA. This Pseudomonas aeruginosa (strain ATCC 15692 / DSM 22644 / CIP 104116 / JCM 14847 / LMG 12228 / 1C / PRS 101 / PAO1) protein is Ribosomal RNA small subunit methyltransferase I.